Here is a 414-residue protein sequence, read N- to C-terminus: Peptide chain release factor subunit 1 (414 aa).

It belongs to the eukaryotic release factor 1 family. As to quaternary structure, heterodimer of two subunits, one of which binds GTP.

The protein resides in the cytoplasm. Its function is as follows. Directs the termination of nascent peptide synthesis (translation) in response to the termination codons UAA, UAG and UGA. The sequence is that of Peptide chain release factor subunit 1 from Methanococcoides burtonii (strain DSM 6242 / NBRC 107633 / OCM 468 / ACE-M).